The primary structure comprises 642 residues: Sterol O-acyltransferase 2 (642 aa).

The interval 174 to 194 (KSSPDAVDSVGKNDGAAPTTV) is disordered. A phosphoserine mark is found at Ser-175 and Ser-176. A run of 5 helical transmembrane segments spans residues 215–235 (FSGLYVAFWMAIAFGAVKALI), 292–312 (TGWIFTSIYEFLFVIFYMYLT), 404–424 (ISAKSFFWFTMFPTLIYQIEY), 442–462 (IFGTIFLMMIDAQILMYPVAM), and 485–505 (LLVDIVPGFIVMYILDFYLIW). The FYXDWWN motif signature appears at 523–529 (FYGDWWN). 2 helical membrane passes run 567–587 (ATLMTFFLSSVVHELAMYVIF) and 622–642 (VIFWLGICMGPSVMCTLYLTF). His-579 is an active-site residue.

It belongs to the membrane-bound acyltransferase family. Sterol o-acyltransferase subfamily.

Its subcellular location is the endoplasmic reticulum membrane. The catalysed reaction is ergosterol + an acyl-CoA = ergosteryl ester + CoA. It catalyses the reaction zymosterol + an acyl-CoA = zymosterol ester + CoA. Sterol O-acyltransferase that catalyzes the formation of stery esters. This Saccharomyces cerevisiae (strain ATCC 204508 / S288c) (Baker's yeast) protein is Sterol O-acyltransferase 2.